A 96-amino-acid polypeptide reads, in one-letter code: U-scoloptoxin(06)-Sm1a (96 aa).

The first 23 residues, 1-23 (MNSFSFFLVIFVVLNLQVAKLMA), serve as a signal peptide directing secretion.

The protein belongs to the scoloptoxin-06 family. Contains 2 disulfide bonds. Expressed by the venom gland.

The protein resides in the secreted. The chain is U-scoloptoxin(06)-Sm1a from Scolopendra morsitans (Tanzanian blue ringleg centipede).